The chain runs to 101 residues: Putative pterin-4-alpha-carbinolamine dehydratase (101 aa).

The protein belongs to the pterin-4-alpha-carbinolamine dehydratase family.

It catalyses the reaction (4aS,6R)-4a-hydroxy-L-erythro-5,6,7,8-tetrahydrobiopterin = (6R)-L-erythro-6,7-dihydrobiopterin + H2O. This is Putative pterin-4-alpha-carbinolamine dehydratase from Rhizobium rhizogenes (strain K84 / ATCC BAA-868) (Agrobacterium radiobacter).